The sequence spans 239 residues: Exosome complex exonuclease RRP46 homolog (239 aa).

M1 bears the N-acetylmethionine mark.

Belongs to the RNase PH family. In terms of assembly, probable component of the RNA exosome complex.

The protein localises to the nucleus. Its subcellular location is the nucleolus. Functionally, probable component of the exosome 3'-&gt;5' exoribonuclease complex, a complex that degrades inherently unstable mRNAs containing AU-rich elements (AREs) within their 3'-untranslated regions. The protein is Exosome complex exonuclease RRP46 homolog of Arabidopsis thaliana (Mouse-ear cress).